We begin with the raw amino-acid sequence, 323 residues long: uncharacterized protein (323 aa).

Belongs to the glycosyltransferase 2 family.

This is an uncharacterized protein from Haemophilus influenzae (strain ATCC 51907 / DSM 11121 / KW20 / Rd).